A 467-amino-acid polypeptide reads, in one-letter code: Dimethylamine methyltransferase MtbB1 (467 aa).

Pyl356 is a non-standard amino acid (pyrrolysine).

This sequence belongs to the dimethylamine methyltransferase family.

The catalysed reaction is Co(I)-[dimethylamine-specific corrinoid protein] + dimethylamine + H(+) = methyl-Co(III)-[dimethylamine-specific corrinoid protein] + methylamine. It functions in the pathway one-carbon metabolism; methanogenesis from dimethylamine. Catalyzes the transfer of a methyl group from dimethylamine to the corrinoid cofactor of MtbC. In Methanosarcina acetivorans (strain ATCC 35395 / DSM 2834 / JCM 12185 / C2A), this protein is Dimethylamine methyltransferase MtbB1 (mtbB1).